The primary structure comprises 593 residues: F-box/LRR-repeat protein 17 (593 aa).

Residues 120–177 (DLDLQLDTDIVQPGRFHAVGLWEVLKRLPPSSLLMAARVCKGWRETSRKMWKAAEELR) enclose the F-box domain. LRR repeat units follow at residues 178–206 (IRVP…SLKI), 207–232 (ESDF…EITT), 237–262 (VNRI…KMEG), 276–304 (LSTL…SLEF), 335–361 (SLKL…SLVL), 362–387 (GINI…DLSG), 414–439 (CPNI…DCGM), 477–502 (LSLW…NLNL), and 503–525 (CSNL…YASG).

As to quaternary structure, part of a SCF (ASK-cullin-F-box) protein ligase complex. Interacts with SKP1A/ASK1, KRP4, KRP6 and KRP7. In terms of tissue distribution, expressed in developing pollen.

It localises to the nucleus. The protein operates within protein modification; protein ubiquitination. In terms of biological role, essential protein for male fertility. Component of the SCF(ASK-cullin-F-box) E3 ubiquitin ligase complex SCF(FBL17), which mediates the ubiquitination and subsequent proteasomal degradation of target proteins. Enables the switch in cell cycle control leading to male germ cell lineage formation from microspores after meiosis. Targets CDKA-1 inhibitors the degradation specifically in male germ cells (e.g. KRP6 and KRP7) and thus enables CDKA-1 activation and germ cell S-phase progression. Promotes twin sperm cell production and double fertilization. This chain is F-box/LRR-repeat protein 17 (FBL17), found in Arabidopsis thaliana (Mouse-ear cress).